A 316-amino-acid chain; its full sequence is L-lactate dehydrogenase (316 aa).

NAD(+) is bound by residues valine 15, aspartate 37, lysine 42, tyrosine 68, and 82–83 (GL). Substrate contacts are provided by residues glutamine 85, arginine 91, and 123–126 (NPVD). NAD(+) is bound by residues 121–123 (ASN) and threonine 146. Position 151-154 (151-154 (DTSR)) interacts with substrate. Beta-D-fructose 1,6-bisphosphate contacts are provided by arginine 156 and histidine 171. The Proton acceptor role is filled by histidine 178. Tyrosine 222 carries the post-translational modification Phosphotyrosine. Residue threonine 231 coordinates substrate.

The protein belongs to the LDH/MDH superfamily. LDH family. As to quaternary structure, homotetramer.

The protein resides in the cytoplasm. The enzyme catalyses (S)-lactate + NAD(+) = pyruvate + NADH + H(+). Its pathway is fermentation; pyruvate fermentation to lactate; (S)-lactate from pyruvate: step 1/1. With respect to regulation, allosterically activated by fructose 1,6-bisphosphate (FBP). In terms of biological role, catalyzes the conversion of lactate to pyruvate. This is L-lactate dehydrogenase from Borreliella afzelii (strain PKo) (Borrelia afzelii).